A 548-amino-acid chain; its full sequence is Acetamidase (548 aa).

Residues Lys-129 and Ser-204 each act as charge relay system in the active site. Ser-228 serves as the catalytic Acyl-ester intermediate.

Belongs to the amidase family.

It catalyses the reaction a monocarboxylic acid amide + H2O = a monocarboxylate + NH4(+). It carries out the reaction acetamide + H2O = acetate + NH4(+). Its function is as follows. Allows acetamide to be used as a sole carbon or nitrogen source. The sequence is that of Acetamidase (amdS) from Emericella nidulans (strain FGSC A4 / ATCC 38163 / CBS 112.46 / NRRL 194 / M139) (Aspergillus nidulans).